The chain runs to 165 residues: Leukotoxin-activating lysine-acyltransferase LktC (165 aa).

Active-site residues include H22 and D91.

This sequence belongs to the RTX toxin acyltransferase family.

It localises to the cytoplasm. It catalyses the reaction a fatty acyl-[ACP] + L-lysyl-[protein] = N(6)-(fatty acyl)-L-lysyl-[protein] + holo-[ACP] + H(+). In terms of biological role, involved in fatty acylation of the protoxin (LktA) at two internal lysine residues, thereby converting it to the active toxin. The polypeptide is Leukotoxin-activating lysine-acyltransferase LktC (lktC) (Pasteurella haemolytica-like sp. (strain 5943B)).